The sequence spans 1435 residues: DNA polymerase III PolC-type (1435 aa).

Residues 420–576 enclose the Exonuclease domain; sequence YVVFDVETTG…YDTEATGYLL (157 aa).

It belongs to the DNA polymerase type-C family. PolC subfamily.

Its subcellular location is the cytoplasm. It catalyses the reaction DNA(n) + a 2'-deoxyribonucleoside 5'-triphosphate = DNA(n+1) + diphosphate. Required for replicative DNA synthesis. This DNA polymerase also exhibits 3' to 5' exonuclease activity. The sequence is that of DNA polymerase III PolC-type from Bacillus cereus (strain ATCC 14579 / DSM 31 / CCUG 7414 / JCM 2152 / NBRC 15305 / NCIMB 9373 / NCTC 2599 / NRRL B-3711).